A 59-amino-acid polypeptide reads, in one-letter code: Large ribosomal subunit protein uL30 (59 aa).

The protein belongs to the universal ribosomal protein uL30 family. Part of the 50S ribosomal subunit.

This is Large ribosomal subunit protein uL30 from Psychrobacter cryohalolentis (strain ATCC BAA-1226 / DSM 17306 / VKM B-2378 / K5).